A 521-amino-acid chain; its full sequence is Pentatricopeptide repeat-containing protein At4g26680, mitochondrial (521 aa).

A mitochondrion-targeting transit peptide spans 1-38; the sequence is MIRISIGVNRRLRYQFSSFAGYSGSENPRLFKTLGAAN. PPR repeat units lie at residues 167 to 201, 202 to 236, 237 to 271, 272 to 306, 307 to 341, 342 to 376, 377 to 411, 412 to 446, 447 to 481, and 482 to 516; these read TPRV…GFLP, TVES…KISP, NPYT…GFRA, TDVS…GLQP, NVVT…NVAP, NTVT…GIQR, DILT…NLVP, NSST…GCHP, NEQT…SIPL, and DSRT…KFLQ.

It belongs to the PPR family. P subfamily.

It is found in the mitochondrion. This Arabidopsis thaliana (Mouse-ear cress) protein is Pentatricopeptide repeat-containing protein At4g26680, mitochondrial.